We begin with the raw amino-acid sequence, 146 residues long: Ribosomal RNA large subunit methyltransferase H (146 aa).

Residues L68, G95, and 114–119 contribute to the S-adenosyl-L-methionine site; that span reads LSSLTF.

This sequence belongs to the RNA methyltransferase RlmH family. Homodimer.

The protein localises to the cytoplasm. The enzyme catalyses pseudouridine(1915) in 23S rRNA + S-adenosyl-L-methionine = N(3)-methylpseudouridine(1915) in 23S rRNA + S-adenosyl-L-homocysteine + H(+). In terms of biological role, specifically methylates the pseudouridine at position 1915 (m3Psi1915) in 23S rRNA. In Thermodesulfovibrio yellowstonii (strain ATCC 51303 / DSM 11347 / YP87), this protein is Ribosomal RNA large subunit methyltransferase H.